The chain runs to 224 residues: Uracil-DNA glycosylase (224 aa).

Catalysis depends on Asp64, which acts as the Proton acceptor.

This sequence belongs to the uracil-DNA glycosylase (UDG) superfamily. UNG family.

It is found in the cytoplasm. The catalysed reaction is Hydrolyzes single-stranded DNA or mismatched double-stranded DNA and polynucleotides, releasing free uracil.. Excises uracil residues from the DNA which can arise as a result of misincorporation of dUMP residues by DNA polymerase or due to deamination of cytosine. The polypeptide is Uracil-DNA glycosylase (Geobacillus sp. (strain WCH70)).